Consider the following 131-residue polypeptide: UPF0102 protein YraN (131 aa).

Residues 1-19 are compositionally biased toward polar residues; that stretch reads MATVPTRSGSPRQLTTKQT. The tract at residues 1-21 is disordered; it reads MATVPTRSGSPRQLTTKQTGD.

The protein belongs to the UPF0102 family.

In Escherichia coli O45:K1 (strain S88 / ExPEC), this protein is UPF0102 protein YraN.